A 332-amino-acid polypeptide reads, in one-letter code: MIDKAYEELIKMKEKIMRDSYTIHKELSESVESILNELWINYSPESVEHSKKLLAIDGGMWVKETRQGVIFIVNAKAIVFEGINEINSEGKVLVHIFSPGNYAKERIELLMQLLELQLALKLVENVDYVLLDGSFSKKLGRHKSELKVDLLDDIVSIDKILSLEEKDEDNMLRFLIAENQLVLSELVSRYKDKLLFISKNSKSSDLFKQAYSDITILELFTQNCGYSKILEKKIDENYILSRKASKLLSGLNYYFTNLRLEPSERLFRLDFFNADKIFEYLKVLKPVSLKGYPYPLIKVHKDVRVGKEDRERIYSILEMKRKDISWWPSQFY.

Mn(2+)-binding residues include Asp-57 and Asp-132.

The protein belongs to the NurA family. Mn(2+) is required as a cofactor.

Involved in DNA double-strand break (DSB) repair. Probably acts with HerA to stimulate resection of the 5' strand and produce the long 3' single-strand that is required for RadA loading. Exhibits both single-stranded endonuclease activity and 5'-3' exonuclease activity on single-stranded and double-stranded DNA. The sequence is that of DNA double-strand break repair nuclease NurA from Sulfolobus acidocaldarius (strain ATCC 33909 / DSM 639 / JCM 8929 / NBRC 15157 / NCIMB 11770).